Reading from the N-terminus, the 189-residue chain is Chitin synthase 1 (189 aa).

The protein belongs to the chitin synthase family.

It localises to the cell membrane. The catalysed reaction is [(1-&gt;4)-N-acetyl-beta-D-glucosaminyl](n) + UDP-N-acetyl-alpha-D-glucosamine = [(1-&gt;4)-N-acetyl-beta-D-glucosaminyl](n+1) + UDP + H(+). Polymerizes chitin, a structural polymer of the cell wall and septum, by transferring the sugar moiety of UDP-GlcNAc to the non-reducing end of the growing chitin polymer. This is Chitin synthase 1 (CHS1) from Xylohypha bantiana.